Reading from the N-terminus, the 393-residue chain is Succinate--CoA ligase [ADP-forming] subunit beta (393 aa).

Positions 9-245 constitute an ATP-grasp domain; that stretch reads KMLFAQYGIP…PSQEDKCETY (237 aa). ATP contacts are provided by residues Lys46, 53–55, Glu99, Ile102, and Glu107; that span reads GRG. Mg(2+) is bound by residues Asn200 and Asp214. Residues Asn265 and 322-324 each bind substrate; that span reads GIV.

The protein belongs to the succinate/malate CoA ligase beta subunit family. As to quaternary structure, heterotetramer of two alpha and two beta subunits. Requires Mg(2+) as cofactor.

The enzyme catalyses succinate + ATP + CoA = succinyl-CoA + ADP + phosphate. The catalysed reaction is GTP + succinate + CoA = succinyl-CoA + GDP + phosphate. Its pathway is carbohydrate metabolism; tricarboxylic acid cycle; succinate from succinyl-CoA (ligase route): step 1/1. Functionally, succinyl-CoA synthetase functions in the citric acid cycle (TCA), coupling the hydrolysis of succinyl-CoA to the synthesis of either ATP or GTP and thus represents the only step of substrate-level phosphorylation in the TCA. The beta subunit provides nucleotide specificity of the enzyme and binds the substrate succinate, while the binding sites for coenzyme A and phosphate are found in the alpha subunit. The protein is Succinate--CoA ligase [ADP-forming] subunit beta of Baumannia cicadellinicola subsp. Homalodisca coagulata.